The chain runs to 587 residues: Cyclic GMP-AMP synthase-like receptor (587 aa).

2 disordered regions span residues 26–48 (IHPS…RRDD) and 77–229 (TRMH…DRPL). 3 stretches are compositionally biased toward basic and acidic residues: residues 95–138 (TRDR…RDSL), 150–185 (DGAR…RESL), and 204–228 (PESR…HDRP). Glutamate 307, aspartate 309, and aspartate 409 together coordinate Mg(2+).

It belongs to the mab-21 family. Mg(2+) is required as a cofactor. It depends on Mn(2+) as a cofactor.

The enzyme catalyses UTP + ATP = 2',3'-cUAMP + 2 diphosphate. Nucleotidyltransferase that catalyzes the formation of cyclic UMP-AMP (2',3'-cUAMP) from ATP and UTP and plays a key role in innate immunity. Acts as a key sensor of double-stranded DNA (dsDNA), the presence of dsDNA in the cytoplasm being a danger signal that triggers the immune responses. Directly binds dsDNA, activating the nucleotidyltransferase activity, leading to synthesis of 2',3'-cUAMP, a second messenger that binds to and activates Sting, thereby triggering the immune response via activation of the NF-kappa-B transcription factor. The sequence is that of Cyclic GMP-AMP synthase-like receptor from Magallana gigas (Pacific oyster).